The sequence spans 423 residues: Protein TylM3 (423 aa).

A compositionally biased stretch (low complexity) spans Met-1 to Ala-21. Disordered regions lie at residues Met-1–Arg-26 and Gly-117–Pro-149. The segment covering Arg-139–Pro-149 has biased composition (basic and acidic residues).

It belongs to the cytochrome P450 family.

Its pathway is antibiotic biosynthesis; tylosin biosynthesis. Its function is as follows. Involved in the biosynthesis of the macrolide antibiotic tylosin derived from the polyketide lactone tylactone. TylM3 is required for the glycosylation of the 5-hydroxyl group of tylactone to yield 5-O-mycaminosytylactone. This Streptomyces fradiae (Streptomyces roseoflavus) protein is Protein TylM3.